A 149-amino-acid chain; its full sequence is Transcriptional repressor NrdR (149 aa).

A zinc finger lies at 3–34 (CPFCGNLETQVVETRVSEDADFIRRRRQCGAC). The ATP-cone domain occupies 49-139 (PAIVKKDGRR…VYRSFEDIDE (91 aa)).

This sequence belongs to the NrdR family. Requires Zn(2+) as cofactor.

Functionally, negatively regulates transcription of bacterial ribonucleotide reductase nrd genes and operons by binding to NrdR-boxes. This chain is Transcriptional repressor NrdR, found in Polaromonas sp. (strain JS666 / ATCC BAA-500).